Consider the following 1863-residue polypeptide: Transient receptor potential cation channel subfamily M member 7 (1863 aa).

The residue at position 1 (Met1) is an N-acetylmethionine. Residues 1-850 are Cytoplasmic-facing; it reads MSQKSWIEST…ITRKFYAFYH (850 aa). At Ser101 the chain carries Phosphoserine. The segment covering 544 to 555 has biased composition (low complexity); sequence NRRSGRNTSSST. Positions 544 to 574 are disordered; sequence NRRSGRNTSSSTPQLRKSHETFGNRADKKEK. Basic and acidic residues predominate over residues 560-573; sequence KSHETFGNRADKKE. The helical transmembrane segment at 851-876 threads the bilayer; it reads APIVKFWFNTLAYLGFLMLYTFVVLV. At 877–882 the chain is on the extracellular side; that stretch reads KMEQLP. A helical membrane pass occupies residues 883 to 904; sequence SVQEWIVIAYIFTYAIEKVREV. Topologically, residues 905 to 923 are cytoplasmic; it reads FMSEAGKISQKIKVWFSDY. The chain crosses the membrane as a helical span at residues 924-943; sequence FNVSDTIAIISFFVGFGLRF. Residues 944-956 are Extracellular-facing; that stretch reads GAKWNYINAYDNH. A helical membrane pass occupies residues 957–980; that stretch reads VFVAGRLIYCLNIIFWYVRLLDFL. Over 981 to 999 the chain is Cytoplasmic; the sequence is AVNQQAGPYVMMIGKMVAN. Residues 1000–1023 form a helical membrane-spanning segment; sequence MFYIVVIMALVLLSFGVPRKAILY. Topologically, residues 1024-1025 are extracellular; that stretch reads PH. Residues 1026 to 1066 constitute an intramembrane region (pore-forming); sequence EEPSWSLAKDIVFHPYWMIFGEVYAYEIDVCANDSTLPTIC. Residues 1067–1069 lie on the Extracellular side of the membrane; it reads GPG. The chain crosses the membrane as a helical span at residues 1070–1098; the sequence is TWLTPFLQAVYLFVQYIIMVNLLIAFFNN. Residues 1099-1863 lie on the Cytoplasmic side of the membrane; sequence VYLQVKAISN…EATNSVRLML (765 aa). Residues Cys1143, Cys1144, and Cys1146 are each lipidated (S-palmitoyl cysteine). Phosphothreonine is present on Thr1163. Ser1191, Ser1193, Ser1224, Ser1255, and Ser1258 each carry phosphoserine. A coiled-coil region spans residues 1198–1250; it reads RVTFERVEQMSIQIKEVGDRVNYIKRSLQSLDSQIGHLQDLSALTVDTLKTLT. Position 1265 is a phosphothreonine (Thr1265). Ser1300, Ser1357, Ser1360, Ser1385, Ser1386, Ser1389, Ser1394, Ser1395, and Ser1403 each carry phosphoserine. Residues 1380–1418 are disordered; that stretch reads NQKLGSSPNSSPHMSSPPTKFSVSTPSQPSCKSHLESTT. Positions 1385 to 1397 are enriched in low complexity; sequence SSPNSSPHMSSPP. Positions 1398–1410 are enriched in polar residues; the sequence is TKFSVSTPSQPSC. Residue Thr1404 is modified to Phosphothreonine. Phosphoserine occurs at positions 1406 and 1445. Thr1454 is subject to Phosphothreonine. Ser1455 bears the Phosphoserine mark. 2 positions are modified to phosphothreonine: Thr1466 and Thr1470. Phosphoserine occurs at positions 1491, 1498, 1502, 1511, 1525, and 1531. A disordered region spans residues 1498-1539; that stretch reads SRRASTEDSPEVDSKAALLPDWLRDRPSNREMPSEGGTLNGL. Residues 1519–1530 show a composition bias toward basic and acidic residues; the sequence is WLRDRPSNREMP. Thr1535 carries the post-translational modification Phosphothreonine. Residue Ser1541 is modified to Phosphoserine. Thr1549 carries the post-translational modification Phosphothreonine. Ser1565 and Ser1567 each carry phosphoserine. At Thr1581 the chain carries Phosphothreonine. Residues 1592–1822 enclose the Alpha-type protein kinase domain; the sequence is ILNNSMSSWS…CCRKLKLPDL (231 aa). Phosphoserine occurs at positions 1596 and 1613. ADP-binding residues include Gly1619, Gly1620, Leu1621, Arg1622, and Lys1646. At Ser1658 the chain carries Phosphoserine. The residue at position 1683 (Thr1683) is a Phosphothreonine. Residues Glu1718, Glu1719, and Met1721 each coordinate ADP. Position 1751 (His1751) interacts with Zn(2+). Asp1765 functions as the Proton acceptor in the catalytic mechanism. Asp1775 provides a ligand contact to ADP. Position 1777 is a phosphoserine (Ser1777). Residues His1808, Cys1810, and Cys1814 each coordinate Zn(2+). Thr1828 bears the Phosphothreonine mark. The disordered stretch occupies residues 1838-1863; sequence ESSDLNLQSGNSTKESEATNSVRLML. Residues 1841-1863 are compositionally biased toward polar residues; it reads DLNLQSGNSTKESEATNSVRLML. 3 positions are modified to phosphoserine: Ser1846, Ser1849, and Ser1858.

The protein in the C-terminal section; belongs to the protein kinase superfamily. Alpha-type protein kinase family. ALPK subfamily. It in the N-terminal section; belongs to the transient receptor (TC 1.A.4) family. LTrpC subfamily. TRPM7 sub-subfamily. As to quaternary structure, homodimer. Homotetramer. Forms heteromers with TRPM6; heteromeric channels are functionally different from the homomeric channels. Interacts with PLCB1. Zn(2+) is required as a cofactor. Post-translationally, palmitoylated; palmitoylation at Cys-1143, Cys-1144 and Cys-1146 promotes TRPM7 trafficking from the Golgi to the surface membrane. Autophosphorylated; autophosphorylation regulates TRPM7 kinase activity towards its substrates. In terms of processing, the C-terminal kinase domain can be cleaved from the channel segment in a cell-type-specific fashion. TRPM7 is cleaved by caspase-8, dissociating the kinase from the ion-conducting pore. The cleaved kinase fragments (M7CKs) can translocate to the cell nucleus and binds chromatin-remodeling complex proteins in a Zn(2+)-dependent manner to ultimately phosphorylate specific Ser/Thr residues of histones. In terms of tissue distribution, found to be expressed in brain and skeletal muscle, with stronger signals in kidney, heart, liver and spleen.

It localises to the cell membrane. It is found in the cytoplasmic vesicle membrane. The protein localises to the nucleus. The catalysed reaction is L-seryl-[protein] + ATP = O-phospho-L-seryl-[protein] + ADP + H(+). It catalyses the reaction L-threonyl-[protein] + ATP = O-phospho-L-threonyl-[protein] + ADP + H(+). The enzyme catalyses Mg(2+)(in) = Mg(2+)(out). It carries out the reaction Ca(2+)(in) = Ca(2+)(out). The catalysed reaction is Zn(2+)(in) = Zn(2+)(out). With respect to regulation, channel displays constitutive activity. Channel activity is negatively regulated by cytosolic Mg(2+), Mg-ATP and low intracellular pH. Resting free cytosolic Mg(2+) and Mg-ATP concentrations seem to be sufficient to block native TRPM7 channel activity. TRPM7 channel activity is highly dependent on membrane levels of phosphatidylinositol 4,5 bisphosphate (PIP2). PIP2 hydrolysis negatively regulates TRPM7 channel activity. TRPM7 kinase activity does not affect channel activity. The kinase activity is controlled through the autophosphorylation of a serine/threonine-rich region located N-terminal to the catalytic domain. In terms of biological role, bifunctional protein that combines an ion channel with an intrinsic kinase domain, enabling it to modulate cellular functions either by conducting ions through the pore or by phosphorylating downstream proteins via its kinase domain. The channel is highly permeable to divalent cations, specifically calcium (Ca2+), magnesium (Mg2+) and zinc (Zn2+) and mediates their influx. Controls a wide range of biological processes such as Ca2(+), Mg(2+) and Zn(2+) homeostasis, vesicular Zn(2+) release channel and intracellular Ca(2+) signaling, embryonic development, immune responses, cell motility, proliferation and differentiation. The C-terminal alpha-kinase domain autophosphorylates cytoplasmic residues of TRPM7. TRPM7 phosphorylates SMAD2, suggesting that TRPM7 kinase may play a role in activating SMAD signaling pathways. In vitro, TRPM7 kinase phosphorylates ANXA1 (annexin A1), myosin II isoforms and a variety of proteins with diverse cellular functions. Functionally, the cleaved channel exhibits substantially higher current and potentiates Fas receptor signaling. The C-terminal kinase domain can be cleaved from the channel segment in a cell-type-specific fashion. In immune cells, the TRPM7 kinase domain is clipped from the channel domain by caspases in response to Fas-receptor stimulation. The cleaved kinase fragments can translocate to the nucleus, and bind chromatin-remodeling complex proteins in a Zn(2+)-dependent manner to ultimately phosphorylate specific Ser/Thr residues of histones known to be functionally important for cell differentiation and embryonic development. This chain is Transient receptor potential cation channel subfamily M member 7 (Trpm7), found in Mus musculus (Mouse).